A 258-amino-acid chain; its full sequence is Probable splicing factor, arginine/serine-rich 3 (258 aa).

An RRM 1 domain is found at 9 to 83 (QKVYVGNLPG…RRIRVEFTRG (75 aa)). Disordered regions lie at residues 81 to 120 (TRGV…PQRR) and 190 to 258 (AYIR…PSPQ). Residues 97–107 (GGDHRGGDFRG) show a composition bias toward basic and acidic residues. Gly residues predominate over residues 108–117 (GRGGGRGGGP). The RRM 2 domain occupies 123–197 (YRVIVEGLPP…ETAYIRVRED (75 aa)). Residues 208–223 (GRDRSRSRSPRAERRA) are compositionally biased toward basic and acidic residues. A compositionally biased stretch (basic residues) spans 228–246 (SPRRSRSRSRSRSRSRSRS). Residues 247-258 (ASRSPSRSPSPQ) are compositionally biased toward low complexity.

It belongs to the splicing factor SR family. Interacts with spk-1. Post-translationally, directly phosphorylated by spk-1 in vitro on serine residues of the RS domain. In terms of tissue distribution, predominantly coexpressed with spk-1 in adult hermaphrodite germlines.

Its subcellular location is the nucleus. Functionally, plays an essential role in embryogenesis. The sequence is that of Probable splicing factor, arginine/serine-rich 3 (rsp-3) from Caenorhabditis elegans.